Here is a 620-residue protein sequence, read N- to C-terminus: 1-deoxy-D-xylulose-5-phosphate synthase (620 aa).

Thiamine diphosphate contacts are provided by residues His80 and 121-123 (GHS). Asp152 provides a ligand contact to Mg(2+). Residues 153 to 154 (GA), Asn181, Tyr288, and Glu370 each bind thiamine diphosphate. Asn181 provides a ligand contact to Mg(2+).

Belongs to the transketolase family. DXPS subfamily. Homodimer. It depends on Mg(2+) as a cofactor. Thiamine diphosphate serves as cofactor.

The catalysed reaction is D-glyceraldehyde 3-phosphate + pyruvate + H(+) = 1-deoxy-D-xylulose 5-phosphate + CO2. The protein operates within metabolic intermediate biosynthesis; 1-deoxy-D-xylulose 5-phosphate biosynthesis; 1-deoxy-D-xylulose 5-phosphate from D-glyceraldehyde 3-phosphate and pyruvate: step 1/1. Its function is as follows. Catalyzes the acyloin condensation reaction between C atoms 2 and 3 of pyruvate and glyceraldehyde 3-phosphate to yield 1-deoxy-D-xylulose-5-phosphate (DXP). The sequence is that of 1-deoxy-D-xylulose-5-phosphate synthase from Shigella dysenteriae serotype 1 (strain Sd197).